The sequence spans 615 residues: DNA mismatch repair protein MutL (615 aa).

Residues 363-397 (FAEPAAREPVAPRYTPAPASGSRPAAPWPNAQPGY) form a disordered region. Over residues 364–391 (AEPAAREPVAPRYTPAPASGSRPAAPWP) the composition is skewed to low complexity.

Belongs to the DNA mismatch repair MutL/HexB family.

Functionally, this protein is involved in the repair of mismatches in DNA. It is required for dam-dependent methyl-directed DNA mismatch repair. May act as a 'molecular matchmaker', a protein that promotes the formation of a stable complex between two or more DNA-binding proteins in an ATP-dependent manner without itself being part of a final effector complex. This Shigella boydii serotype 4 (strain Sb227) protein is DNA mismatch repair protein MutL.